A 525-amino-acid chain; its full sequence is Lysine--tRNA ligase (525 aa).

Residues glutamate 419 and glutamate 426 each contribute to the Mg(2+) site.

This sequence belongs to the class-II aminoacyl-tRNA synthetase family. Homodimer. Mg(2+) is required as a cofactor.

Its subcellular location is the cytoplasm. The catalysed reaction is tRNA(Lys) + L-lysine + ATP = L-lysyl-tRNA(Lys) + AMP + diphosphate. In Deinococcus radiodurans (strain ATCC 13939 / DSM 20539 / JCM 16871 / CCUG 27074 / LMG 4051 / NBRC 15346 / NCIMB 9279 / VKM B-1422 / R1), this protein is Lysine--tRNA ligase (lysS).